The primary structure comprises 601 residues: Protein CT_858 (601 aa).

This sequence belongs to the chlamydial CPn_1016/CT_858/TC_0248 family.

This chain is Protein CT_858, found in Chlamydia trachomatis serovar D (strain ATCC VR-885 / DSM 19411 / UW-3/Cx).